We begin with the raw amino-acid sequence, 73 residues long: Conotoxin CnIIIF (73 aa).

A signal peptide spans 1 to 19; sequence MSKLGVLLTICLLLFPLTA. Positions 20-51 are excised as a propeptide; sequence LPMDGDQSVDRPAERMQDDISSGQHPLFNQKR. 3 disulfides stabilise this stretch: Cys53-Cys72, Cys54-Cys70, and Cys60-Cys73.

It belongs to the conotoxin M superfamily. As to expression, expressed by the venom duct.

It localises to the secreted. Its function is as follows. Shows a paralytic effect in fish. The polypeptide is Conotoxin CnIIIF (Conus consors (Singed cone)).